The sequence spans 192 residues: Xanthine phosphoribosyltransferase (192 aa).

2 residues coordinate xanthine: Leu20 and Asn27. 128–132 (ANGDA) serves as a coordination point for 5-phospho-alpha-D-ribose 1-diphosphate. Residue Lys156 participates in xanthine binding.

Belongs to the purine/pyrimidine phosphoribosyltransferase family. Xpt subfamily. As to quaternary structure, homodimer.

Its subcellular location is the cytoplasm. It catalyses the reaction XMP + diphosphate = xanthine + 5-phospho-alpha-D-ribose 1-diphosphate. Its pathway is purine metabolism; XMP biosynthesis via salvage pathway; XMP from xanthine: step 1/1. Functionally, converts the preformed base xanthine, a product of nucleic acid breakdown, to xanthosine 5'-monophosphate (XMP), so it can be reused for RNA or DNA synthesis. The polypeptide is Xanthine phosphoribosyltransferase (Staphylococcus carnosus (strain TM300)).